The sequence spans 266 residues: Tryptophan synthase alpha chain (266 aa).

Active-site proton acceptor residues include Glu-49 and Asp-60.

This sequence belongs to the TrpA family. In terms of assembly, tetramer of two alpha and two beta chains.

It catalyses the reaction (1S,2R)-1-C-(indol-3-yl)glycerol 3-phosphate + L-serine = D-glyceraldehyde 3-phosphate + L-tryptophan + H2O. Its pathway is amino-acid biosynthesis; L-tryptophan biosynthesis; L-tryptophan from chorismate: step 5/5. Functionally, the alpha subunit is responsible for the aldol cleavage of indoleglycerol phosphate to indole and glyceraldehyde 3-phosphate. The protein is Tryptophan synthase alpha chain of Synechococcus elongatus (strain ATCC 33912 / PCC 7942 / FACHB-805) (Anacystis nidulans R2).